The sequence spans 307 residues: Glycerol-3-phosphate dehydrogenase [NAD(P)+] (307 aa).

NADPH is bound by residues F11, R31, and K95. Sn-glycerol 3-phosphate-binding residues include K95, G121, and S123. An NADPH-binding site is contributed by A125. 5 residues coordinate sn-glycerol 3-phosphate: K176, D229, S239, R240, and N241. The Proton acceptor role is filled by K176. R240 lines the NADPH pocket. Residue E261 participates in NADPH binding.

This sequence belongs to the NAD-dependent glycerol-3-phosphate dehydrogenase family.

Its subcellular location is the cytoplasm. The enzyme catalyses sn-glycerol 3-phosphate + NAD(+) = dihydroxyacetone phosphate + NADH + H(+). It carries out the reaction sn-glycerol 3-phosphate + NADP(+) = dihydroxyacetone phosphate + NADPH + H(+). The protein operates within membrane lipid metabolism; glycerophospholipid metabolism. Its function is as follows. Catalyzes the reduction of the glycolytic intermediate dihydroxyacetone phosphate (DHAP) to sn-glycerol 3-phosphate (G3P), the key precursor for phospholipid synthesis. The sequence is that of Glycerol-3-phosphate dehydrogenase [NAD(P)+] from Jannaschia sp. (strain CCS1).